A 280-amino-acid chain; its full sequence is Large ribosomal subunit protein uL2 (280 aa).

Positions 215–280 (GRRPHVRGSA…IQRANDKKEK (66 aa)) are disordered.

This sequence belongs to the universal ribosomal protein uL2 family. Part of the 50S ribosomal subunit. Forms a bridge to the 30S subunit in the 70S ribosome.

Its function is as follows. One of the primary rRNA binding proteins. Required for association of the 30S and 50S subunits to form the 70S ribosome, for tRNA binding and peptide bond formation. It has been suggested to have peptidyltransferase activity; this is somewhat controversial. Makes several contacts with the 16S rRNA in the 70S ribosome. This is Large ribosomal subunit protein uL2 from Dictyoglomus thermophilum (strain ATCC 35947 / DSM 3960 / H-6-12).